Here is a 220-residue protein sequence, read N- to C-terminus: Aklanonic acid methyltransferase DauC (220 aa).

The protein belongs to the methyltransferase superfamily. DnrC family. Homodimer.

The enzyme catalyses aklanonate + S-adenosyl-L-methionine = methyl aklanonate + S-adenosyl-L-homocysteine. It functions in the pathway antibiotic biosynthesis; daunorubicin biosynthesis. It participates in antibiotic biosynthesis; carminomycin biosynthesis. Its pathway is antibiotic biosynthesis; rhodomycin biosynthesis. The protein operates within antibiotic biosynthesis; aclacinomycin biosynthesis. Its function is as follows. Involved in the biosynthesis of aklavinone which is an important precursor common to the formation of the clinically significant anthracyclines such as carminomycin, daunorubicin (daunomycin), rhodomycin, aclacinomycin T (aklavin) and aclacinomycin A (aclarubicin). These compounds are aromatic polyketide antibiotics that exhibit high cytotoxicity and are widely applied in the chemotherapy of a variety of cancers. Catalyzes the methyl esterification of aklanonic acid to yield aklanonic acid methyl ester. In Streptomyces sp. (strain C5), this protein is Aklanonic acid methyltransferase DauC (dauC).